We begin with the raw amino-acid sequence, 209 residues long: MSVDEVTKKFEETVSVDGPKTVLSDAKDFEVKHPLNTKWTLWYTKPAVDKSESWSDLLRPVTSFQSVEEFWAIVQNIPEPHELPLKSDYHVFRNDIRPEWEDSANAKGGKWSFQVRGRGAEIDELWLRTLLAVIGETIDEEDSQINGVVLNVRKGGNRFALWTKSCDKEPLSNIGARFKQVLKLADEDTLEFFPHSTANDRHSQPTITL.

Belongs to the eukaryotic initiation factor 4E family. EIF4F is a multi-subunit complex, the composition of which varies with external and internal environmental conditions. It is composed of at least eIF4A, eIF4E and eIF4G. eIF4E is also known to interact with other partners.

Recognizes and binds the 7-methylguanosine-containing mRNA cap during an early step in the initiation of protein synthesis and facilitates ribosome binding by inducing the unwinding of the mRNAs secondary structures. The polypeptide is Eukaryotic translation initiation factor 4E (TIF45) (Candida glabrata (strain ATCC 2001 / BCRC 20586 / JCM 3761 / NBRC 0622 / NRRL Y-65 / CBS 138) (Yeast)).